The following is a 116-amino-acid chain: Ribosome-binding factor A (116 aa).

The protein belongs to the RbfA family. As to quaternary structure, monomer. Binds 30S ribosomal subunits, but not 50S ribosomal subunits or 70S ribosomes.

The protein resides in the cytoplasm. Its function is as follows. One of several proteins that assist in the late maturation steps of the functional core of the 30S ribosomal subunit. Associates with free 30S ribosomal subunits (but not with 30S subunits that are part of 70S ribosomes or polysomes). Required for efficient processing of 16S rRNA. May interact with the 5'-terminal helix region of 16S rRNA. This Streptococcus equi subsp. zooepidemicus (strain H70) protein is Ribosome-binding factor A.